Consider the following 85-residue polypeptide: Large ribosomal subunit protein bL31B (85 aa).

This sequence belongs to the bacterial ribosomal protein bL31 family. Type B subfamily. Part of the 50S ribosomal subunit.

This Staphylococcus saprophyticus subsp. saprophyticus (strain ATCC 15305 / DSM 20229 / NCIMB 8711 / NCTC 7292 / S-41) protein is Large ribosomal subunit protein bL31B.